The sequence spans 512 residues: 23S rRNA (uracil(1939)-C(5))-methyltransferase RlmD (512 aa).

Low complexity predominate over residues 1-14 (MQPTDSKTSTSDTT). The segment at 1 to 45 (MQPTDSKTSTSDTTEQPNETQTITIPPSKKKSKPSSKTRRRLKDA) is disordered. Residues 15–25 (EQPNETQTITI) show a composition bias toward polar residues. The segment covering 28–42 (SKKKSKPSSKTRRRL) has biased composition (basic residues). Residues 41 to 113 (RLKDAEPLPF…TSFEEGDAVN (73 aa)) form the TRAM domain. [4Fe-4S] cluster is bound by residues C127, C133, C136, and C215. Positions 340, 369, 374, 393, 420, and 441 each coordinate S-adenosyl-L-methionine. C467 serves as the catalytic Nucleophile.

The protein belongs to the class I-like SAM-binding methyltransferase superfamily. RNA M5U methyltransferase family. RlmD subfamily.

The catalysed reaction is uridine(1939) in 23S rRNA + S-adenosyl-L-methionine = 5-methyluridine(1939) in 23S rRNA + S-adenosyl-L-homocysteine + H(+). Its function is as follows. Catalyzes the formation of 5-methyl-uridine at position 1939 (m5U1939) in 23S rRNA. The polypeptide is 23S rRNA (uracil(1939)-C(5))-methyltransferase RlmD (Psychrobacter arcticus (strain DSM 17307 / VKM B-2377 / 273-4)).